Reading from the N-terminus, the 156-residue chain is ATP synthase subunit b (156 aa).

A helical transmembrane segment spans residues 7 to 27 (LIGQTVAFIIFVWFCMKFVWP).

It belongs to the ATPase B chain family. F-type ATPases have 2 components, F(1) - the catalytic core - and F(0) - the membrane proton channel. F(1) has five subunits: alpha(3), beta(3), gamma(1), delta(1), epsilon(1). F(0) has three main subunits: a(1), b(2) and c(10-14). The alpha and beta chains form an alternating ring which encloses part of the gamma chain. F(1) is attached to F(0) by a central stalk formed by the gamma and epsilon chains, while a peripheral stalk is formed by the delta and b chains.

The protein localises to the cell inner membrane. F(1)F(0) ATP synthase produces ATP from ADP in the presence of a proton or sodium gradient. F-type ATPases consist of two structural domains, F(1) containing the extramembraneous catalytic core and F(0) containing the membrane proton channel, linked together by a central stalk and a peripheral stalk. During catalysis, ATP synthesis in the catalytic domain of F(1) is coupled via a rotary mechanism of the central stalk subunits to proton translocation. Functionally, component of the F(0) channel, it forms part of the peripheral stalk, linking F(1) to F(0). This chain is ATP synthase subunit b, found in Shewanella baltica (strain OS185).